The chain runs to 156 residues: Small ribosomal subunit protein uS7 (156 aa).

The protein belongs to the universal ribosomal protein uS7 family. In terms of assembly, part of the 30S ribosomal subunit. Contacts proteins S9 and S11.

Functionally, one of the primary rRNA binding proteins, it binds directly to 16S rRNA where it nucleates assembly of the head domain of the 30S subunit. Is located at the subunit interface close to the decoding center, probably blocks exit of the E-site tRNA. This is Small ribosomal subunit protein uS7 from Nostoc punctiforme (strain ATCC 29133 / PCC 73102).